Reading from the N-terminus, the 265-residue chain is Speedy protein E8 (265 aa).

The tract at residues 1–80 (MGQILGKIMM…EPEKELAPEP (80 aa)) is disordered. Over residues 66–80 (DESDDEPEKELAPEP) the composition is skewed to acidic residues.

It belongs to the Speedy/Ringo family.

This Homo sapiens (Human) protein is Speedy protein E8.